A 70-amino-acid chain; its full sequence is Large ribosomal subunit protein eL38 (70 aa).

It belongs to the eukaryotic ribosomal protein eL38 family.

The chain is Large ribosomal subunit protein eL38 (rpl-38) from Ostertagia ostertagi (Brown stomach worm).